We begin with the raw amino-acid sequence, 623 residues long: Chaperone protein HtpG (623 aa).

The segment at 1-336 (MSETNTQKAA…TEDLPLNVSR (336 aa)) is a; substrate-binding. The b stretch occupies residues 337–546 (EMLQATPVLA…DGGPDLTMQR (210 aa)). The tract at residues 547–623 (LMRRSGQAMP…ATLLAGPAAE (77 aa)) is c.

It belongs to the heat shock protein 90 family. Homodimer.

It is found in the cytoplasm. Molecular chaperone. Has ATPase activity. This Gluconobacter oxydans (strain 621H) (Gluconobacter suboxydans) protein is Chaperone protein HtpG.